A 126-amino-acid polypeptide reads, in one-letter code: MAILGLGTDIVEIARIEAVIARSGDRLARRVLSDNEWAIWKTHHQPVRFLAKRFAVKEAAAKAFGTGIRNGLAFNQFEVFNDELGKPRLRLWGEALKLAEKLGVVNMHVTLADERHYACATVIIES.

Residues D9 and E58 each contribute to the Mg(2+) site.

Belongs to the P-Pant transferase superfamily. AcpS family. It depends on Mg(2+) as a cofactor.

It localises to the cytoplasm. The catalysed reaction is apo-[ACP] + CoA = holo-[ACP] + adenosine 3',5'-bisphosphate + H(+). Transfers the 4'-phosphopantetheine moiety from coenzyme A to a Ser of acyl-carrier-protein. This Escherichia coli (strain ATCC 8739 / DSM 1576 / NBRC 3972 / NCIMB 8545 / WDCM 00012 / Crooks) protein is Holo-[acyl-carrier-protein] synthase.